Consider the following 455-residue polypeptide: UDP-N-acetylmuramoylalanine--D-glutamate ligase (455 aa).

An ATP-binding site is contributed by 117–123 (GTNGKTT).

This sequence belongs to the MurCDEF family.

It is found in the cytoplasm. It carries out the reaction UDP-N-acetyl-alpha-D-muramoyl-L-alanine + D-glutamate + ATP = UDP-N-acetyl-alpha-D-muramoyl-L-alanyl-D-glutamate + ADP + phosphate + H(+). Its pathway is cell wall biogenesis; peptidoglycan biosynthesis. Its function is as follows. Cell wall formation. Catalyzes the addition of glutamate to the nucleotide precursor UDP-N-acetylmuramoyl-L-alanine (UMA). The polypeptide is UDP-N-acetylmuramoylalanine--D-glutamate ligase (Alkaliphilus metalliredigens (strain QYMF)).